Reading from the N-terminus, the 336-residue chain is Ketol-acid reductoisomerase (NADP(+)) (336 aa).

The 181-residue stretch at 5 to 185 (SKIYTDKDSN…GATRAGVIPT (181 aa)) folds into the KARI N-terminal Rossmann domain. NADP(+)-binding positions include 28–31 (YGSQ), serine 56, and 86–89 (DMVQ). The active site involves histidine 111. Position 137 (glycine 137) interacts with NADP(+). The region spanning 186–331 (TFKEETETDL…NQLKDLIQKG (146 aa)) is the KARI C-terminal knotted domain. Aspartate 194, glutamate 198, glutamate 230, and glutamate 234 together coordinate Mg(2+). Residue serine 255 coordinates substrate.

The protein belongs to the ketol-acid reductoisomerase family. Requires Mg(2+) as cofactor.

It carries out the reaction (2R)-2,3-dihydroxy-3-methylbutanoate + NADP(+) = (2S)-2-acetolactate + NADPH + H(+). The catalysed reaction is (2R,3R)-2,3-dihydroxy-3-methylpentanoate + NADP(+) = (S)-2-ethyl-2-hydroxy-3-oxobutanoate + NADPH + H(+). Its pathway is amino-acid biosynthesis; L-isoleucine biosynthesis; L-isoleucine from 2-oxobutanoate: step 2/4. It participates in amino-acid biosynthesis; L-valine biosynthesis; L-valine from pyruvate: step 2/4. Involved in the biosynthesis of branched-chain amino acids (BCAA). Catalyzes an alkyl-migration followed by a ketol-acid reduction of (S)-2-acetolactate (S2AL) to yield (R)-2,3-dihydroxy-isovalerate. In the isomerase reaction, S2AL is rearranged via a Mg-dependent methyl migration to produce 3-hydroxy-3-methyl-2-ketobutyrate (HMKB). In the reductase reaction, this 2-ketoacid undergoes a metal-dependent reduction by NADPH to yield (R)-2,3-dihydroxy-isovalerate. This is Ketol-acid reductoisomerase (NADP(+)) from Saccharolobus islandicus (strain Y.N.15.51 / Yellowstone #2) (Sulfolobus islandicus).